A 299-amino-acid polypeptide reads, in one-letter code: 33 kDa chaperonin (299 aa).

2 disulfides stabilise this stretch: cysteine 240–cysteine 242 and cysteine 273–cysteine 276.

Belongs to the HSP33 family. In terms of processing, under oxidizing conditions two disulfide bonds are formed involving the reactive cysteines. Under reducing conditions zinc is bound to the reactive cysteines and the protein is inactive.

The protein resides in the cytoplasm. Redox regulated molecular chaperone. Protects both thermally unfolding and oxidatively damaged proteins from irreversible aggregation. Plays an important role in the bacterial defense system toward oxidative stress. The polypeptide is 33 kDa chaperonin (Gloeothece citriformis (strain PCC 7424) (Cyanothece sp. (strain PCC 7424))).